We begin with the raw amino-acid sequence, 260 residues long: Phosphate import ATP-binding protein PstB (260 aa).

The ABC transporter domain maps to 14–255; it reads IETENLNLFY…PKNTKTEEYI (242 aa). 46–53 contributes to the ATP binding site; it reads GPSGCGKS.

Belongs to the ABC transporter superfamily. Phosphate importer (TC 3.A.1.7) family. The complex is composed of two ATP-binding proteins (PstB), two transmembrane proteins (PstC and PstA) and a solute-binding protein (PstS).

It is found in the cell inner membrane. The enzyme catalyses phosphate(out) + ATP + H2O = ADP + 2 phosphate(in) + H(+). Functionally, part of the ABC transporter complex PstSACB involved in phosphate import. Responsible for energy coupling to the transport system. This chain is Phosphate import ATP-binding protein PstB, found in Borreliella afzelii (strain PKo) (Borrelia afzelii).